Reading from the N-terminus, the 195-residue chain is Fe/S biogenesis protein NfuA (195 aa).

Cys152 and Cys155 together coordinate [4Fe-4S] cluster.

The protein belongs to the NfuA family. As to quaternary structure, homodimer. It depends on [4Fe-4S] cluster as a cofactor.

Involved in iron-sulfur cluster biogenesis. Binds a 4Fe-4S cluster, can transfer this cluster to apoproteins, and thereby intervenes in the maturation of Fe/S proteins. Could also act as a scaffold/chaperone for damaged Fe/S proteins. The polypeptide is Fe/S biogenesis protein NfuA (Vibrio cholerae serotype O1 (strain ATCC 39541 / Classical Ogawa 395 / O395)).